Here is a 367-residue protein sequence, read N- to C-terminus: Choline-phosphate cytidylyltransferase A (367 aa).

Position 1 is an N-acetylmethionine (methionine 1). Residues 1-32 (MDAQSSAKVNSRKRRKEAPGPNGATEEDGIPS) form a disordered region. Lysine 8 is modified (N6-acetyllysine). CTP is bound by residues isoleucine 84, phenylalanine 85, histidine 92, and lysine 122. Phosphocholine is bound by residues lysine 122 and tryptophan 151. CTP contacts are provided by histidine 168, aspartate 169, tyrosine 173, glutamine 195, arginine 196, threonine 197, and isoleucine 200. 2 amphipathic regions span residues 228-287 (KELN…EFIG) and 298-315 (ALKH…QAIS). Serine 233 bears the Phosphoserine mark. The segment at 272 to 293 (IDLIQKWEEKSREFIGSFLEMF) is autoinhibitory (AI). Residues 313–367 (AISPKQSPSSSPTHERSPSPSFRWPFSGKTSPSSSPASLSRCRAVTCDISEDEED) form a disordered region. 5 positions are modified to phosphoserine: serine 315, serine 319, serine 321, serine 322, and serine 323. A compositionally biased stretch (polar residues) spans 315-324 (SPKQSPSSSP). The stretch at 319–324 (SPSSSP) is repeat 1. Positions 319–348 (SPSSSPTHERSPSPSFRWPFSGKTSPSSSP) are 3 X repeats. Threonine 325 is subject to Phosphothreonine. Residues serine 329, serine 331, and serine 333 each carry the phosphoserine modification. The stretch at 329-333 (SPSPS) is one 2; approximate repeat. Over residues 330–352 (PSPSFRWPFSGKTSPSSSPASLS) the composition is skewed to low complexity. The residue at position 342 (threonine 342) is a Phosphothreonine. Serine 343, serine 345, serine 346, serine 347, serine 350, and serine 352 each carry phosphoserine. Repeat 3 spans residues 343–348 (SPSSSP). Threonine 358 bears the Phosphothreonine mark. Position 362 is a phosphoserine (serine 362).

The protein belongs to the cytidylyltransferase family. Homodimer. Post-translationally, the serine residues of the C-terminus are phosphorylated. The inactive soluble form is stabilized by phosphorylation, the active membrane bound form is promoted by anionic lipids or diacylglycerol, and is stabilized by dephosphorylation. Monoubiquitinated by the SCF(FBXL2) complex, leading to proteasomal degradation. In terms of tissue distribution, brain and liver (at protein level). Also found in heart, kidney, spleen, lung, skeletal muscle, ovary and testis.

Its subcellular location is the cytoplasm. The protein resides in the cytosol. It is found in the membrane. It localises to the endoplasmic reticulum membrane. The protein localises to the nucleus. The catalysed reaction is phosphocholine + CTP + H(+) = CDP-choline + diphosphate. Its pathway is phospholipid metabolism; phosphatidylcholine biosynthesis; phosphatidylcholine from phosphocholine: step 1/2. Its activity is regulated as follows. Interconverts between an inactive cytosolic form and an active membrane-bound form. Activation involves disruption of an inhibitory interaction between helices at the base of the active site and the autoinhibitory (AI) region. Catalyzes the key rate-limiting step in the CDP-choline pathway for phosphatidylcholine biosynthesis. The polypeptide is Choline-phosphate cytidylyltransferase A (Pcyt1a) (Mus musculus (Mouse)).